Consider the following 127-residue polypeptide: Large ribosomal subunit protein bL12 (127 aa).

Positions 94-114 (VDGAPSTLKEAASKEEAEEAK) are disordered. Residues 104-114 (AASKEEAEEAK) show a composition bias toward basic and acidic residues.

The protein belongs to the bacterial ribosomal protein bL12 family. Homodimer. Part of the ribosomal stalk of the 50S ribosomal subunit. Forms a multimeric L10(L12)X complex, where L10 forms an elongated spine to which 2 to 4 L12 dimers bind in a sequential fashion. Binds GTP-bound translation factors.

Forms part of the ribosomal stalk which helps the ribosome interact with GTP-bound translation factors. Is thus essential for accurate translation. The chain is Large ribosomal subunit protein bL12 from Nitratidesulfovibrio vulgaris (strain ATCC 29579 / DSM 644 / CCUG 34227 / NCIMB 8303 / VKM B-1760 / Hildenborough) (Desulfovibrio vulgaris).